The primary structure comprises 26 residues: Stage V sporulation protein M (26 aa).

The important for localization stretch occupies residues 3-9 (FYTIKLP).

As to quaternary structure, interacts with SpoIVA. May interact with the ATP-dependent protease FtsH.

The protein localises to the forespore outer membrane. Its function is as follows. Coordinates cortex and coat assembly during sporulation. Associates with the spore coat protein SpoIVA and with the outer forespore membrane, thereby serving as a membrane anchor that tethers SpoIVA and the entire spore coat to the forespore surface. May also serve as a competitive inhibitor of FtsH activity during sporulation. This Bacillus subtilis (strain 168) protein is Stage V sporulation protein M.